We begin with the raw amino-acid sequence, 476 residues long: Glycogen synthase (476 aa).

Lys-15 provides a ligand contact to ADP-alpha-D-glucose.

The protein belongs to the glycosyltransferase 1 family. Bacterial/plant glycogen synthase subfamily.

The enzyme catalyses [(1-&gt;4)-alpha-D-glucosyl](n) + ADP-alpha-D-glucose = [(1-&gt;4)-alpha-D-glucosyl](n+1) + ADP + H(+). It participates in glycan biosynthesis; glycogen biosynthesis. Functionally, synthesizes alpha-1,4-glucan chains using ADP-glucose. The protein is Glycogen synthase (glgA) of Haemophilus influenzae (strain ATCC 51907 / DSM 11121 / KW20 / Rd).